The following is a 233-amino-acid chain: Leucyl/phenylalanyl-tRNA--protein transferase (233 aa).

Belongs to the L/F-transferase family.

The protein resides in the cytoplasm. It carries out the reaction N-terminal L-lysyl-[protein] + L-leucyl-tRNA(Leu) = N-terminal L-leucyl-L-lysyl-[protein] + tRNA(Leu) + H(+). It catalyses the reaction N-terminal L-arginyl-[protein] + L-leucyl-tRNA(Leu) = N-terminal L-leucyl-L-arginyl-[protein] + tRNA(Leu) + H(+). The catalysed reaction is L-phenylalanyl-tRNA(Phe) + an N-terminal L-alpha-aminoacyl-[protein] = an N-terminal L-phenylalanyl-L-alpha-aminoacyl-[protein] + tRNA(Phe). Functions in the N-end rule pathway of protein degradation where it conjugates Leu, Phe and, less efficiently, Met from aminoacyl-tRNAs to the N-termini of proteins containing an N-terminal arginine or lysine. This Klebsiella pneumoniae subsp. pneumoniae (strain ATCC 700721 / MGH 78578) protein is Leucyl/phenylalanyl-tRNA--protein transferase.